The chain runs to 319 residues: MNFNINILGTGGTRPLHNRYLTSVLIEYHGESILFDCGEATQMSLRKQKISWQKIKMICITHLHADHITGLLGIVMLMAQSGDTRKEPLTIIGPIGIKKYLETNIELLRVHKNYQIIYKEIIINKTEPVLYEDKRKRIEYIKLKHSIDCIGYLFIEKDKPGKFDTQKAESLNIPKGPIRKKLQEGYEVILNGRKIVPSEILGEIKKGLKFAYITDTAYFEELSTYIQNFNLVIIESTFKDDLKEEAKKKLHLTAKLAAQITKKAKVYQTGLIHFSERYTLNKDLYELLNEAQQEYPNGNIFLAKDGMKLKANKDKFIIK.

Residues His-62, His-64, Asp-66, His-67, His-145, Asp-215, and His-273 each contribute to the Zn(2+) site. The active-site Proton acceptor is Asp-66.

It belongs to the RNase Z family. As to quaternary structure, homodimer. Zn(2+) serves as cofactor.

The catalysed reaction is Endonucleolytic cleavage of RNA, removing extra 3' nucleotides from tRNA precursor, generating 3' termini of tRNAs. A 3'-hydroxy group is left at the tRNA terminus and a 5'-phosphoryl group is left at the trailer molecule.. In terms of biological role, zinc phosphodiesterase, which displays some tRNA 3'-processing endonuclease activity. Probably involved in tRNA maturation, by removing a 3'-trailer from precursor tRNA. This is Ribonuclease Z from Borrelia recurrentis (strain A1).